Here is a 294-residue protein sequence, read N- to C-terminus: MSRIEALPTHIKAQVLAEALPWLKQLHGKVVVVKYGGNAMTDDTLRRAFAADMAFLRNCGIHPVVVHGGGPQITAMLRRLGIEGDFKGGFRVTTPEVLDVARMVLFGQVGRELVNLINAHGPYAVGITGEDAQLFTAVRRSVTVDGVATDIGLVGDVDQVNTAAMLDLVAAGRIPVVSTLAPDADGVVHNINADTAAAAVAEALGAEKLLMLTDIDGLYTRWPDRDSLVSEIDTGTLAQLLPTLESGMVPKVEACLRAVIGGVPSAHIIDGRVTHCVLVELFTDAGTGTKVVRG.

Substrate-binding positions include 69-70, R91, and N190; that span reads GG.

The protein belongs to the acetylglutamate kinase family. ArgB subfamily.

It is found in the cytoplasm. The catalysed reaction is N-acetyl-L-glutamate + ATP = N-acetyl-L-glutamyl 5-phosphate + ADP. It participates in amino-acid biosynthesis; L-arginine biosynthesis; N(2)-acetyl-L-ornithine from L-glutamate: step 2/4. In terms of biological role, catalyzes the ATP-dependent phosphorylation of N-acetyl-L-glutamate. The polypeptide is Acetylglutamate kinase (Mycobacterium bovis (strain ATCC BAA-935 / AF2122/97)).